We begin with the raw amino-acid sequence, 478 residues long: Multidrug resistance outer membrane protein MdtQ (478 aa).

An N-terminal signal peptide occupies residues methionine 1–glycine 21. Cysteine 22 carries N-palmitoyl cysteine lipidation. A lipid anchor (S-diacylglycerol cysteine) is attached at cysteine 22.

The protein belongs to the outer membrane factor (OMF) (TC 1.B.17) family.

It is found in the cell outer membrane. Its function is as follows. Could be involved in resistance to puromycin, acriflavine and tetraphenylarsonium chloride. The chain is Multidrug resistance outer membrane protein MdtQ (mdtQ) from Escherichia coli O6:H1 (strain CFT073 / ATCC 700928 / UPEC).